A 137-amino-acid chain; its full sequence is Large ribosomal subunit protein uL16 (137 aa).

A compositionally biased stretch (basic residues) spans 1–17 (MLQPKRTKFRKTHKGRN). The tract at residues 1 to 24 (MLQPKRTKFRKTHKGRNRGLANSG) is disordered.

It belongs to the universal ribosomal protein uL16 family. Part of the 50S ribosomal subunit.

In terms of biological role, binds 23S rRNA and is also seen to make contacts with the A and possibly P site tRNAs. This Aeromonas hydrophila subsp. hydrophila (strain ATCC 7966 / DSM 30187 / BCRC 13018 / CCUG 14551 / JCM 1027 / KCTC 2358 / NCIMB 9240 / NCTC 8049) protein is Large ribosomal subunit protein uL16.